The chain runs to 290 residues: Signal peptidase I (290 aa).

Over methionine 1–serine 13 the chain is Cytoplasmic. Residues tryptophan 14–isoleucine 34 form a helical membrane-spanning segment. The Extracellular segment spans residues proline 35–histidine 290. Residues serine 38 and lysine 106 contribute to the active site.

Belongs to the peptidase S26 family.

Its subcellular location is the cell membrane. The enzyme catalyses Cleavage of hydrophobic, N-terminal signal or leader sequences from secreted and periplasmic proteins.. This Helicobacter pylori (strain J99 / ATCC 700824) (Campylobacter pylori J99) protein is Signal peptidase I (lepB).